Consider the following 965-residue polypeptide: FKBP12-associated protein 1 (965 aa).

The RING-type; degenerate zinc-finger motif lies at Cys68–Tyr118. NF-X1-type zinc fingers lie at residues Cys159 to Arg177, Cys216 to Glu235, Cys362 to Gln382, Cys468 to Glu487, and Cys586 to Gln606. The R3H domain occupies Glu733–Asp796. A Phosphothreonine modification is found at Thr951. At Ser958 the chain carries Phosphoserine.

Belongs to the NFX1 family. In terms of assembly, interacts with FPR1.

The protein localises to the cytoplasm. It localises to the nucleus. Functionally, may play a role in transcription regulation. The chain is FKBP12-associated protein 1 (FAP1) from Saccharomyces cerevisiae (strain ATCC 204508 / S288c) (Baker's yeast).